A 135-amino-acid polypeptide reads, in one-letter code: Small ribosomal subunit protein uS9 (135 aa).

Basic and acidic residues predominate over residues 107–118 (LVGDPRRTEPHK). Residues 107–135 (LVGDPRRTEPHKPNRSTKGPRAKRQKSYR) are disordered. Residues 119 to 135 (PNRSTKGPRAKRQKSYR) are compositionally biased toward basic residues.

It belongs to the universal ribosomal protein uS9 family. Part of the 30S ribosomal subunit.

In Pyrococcus furiosus (strain ATCC 43587 / DSM 3638 / JCM 8422 / Vc1), this protein is Small ribosomal subunit protein uS9.